Here is a 193-residue protein sequence, read N- to C-terminus: MKLSKSTLVFSALLVILAAASAAPANQFIKTSCTLTTYPAVCEQSLSAYAKTIQNNPQELASTALQVSLTRTQQAQTFMKRLNKFKGLKARQYAAIHDCLEEVEDSLDRVSRSCDEMKNLSHAKGNDFTFRMSNVETWVSAALTDETTCMDGFAGKGMDGKIKESVRAQVVAVARVTSNALALVNNFAAKHKH.

The first 22 residues, 1–22 (MKLSKSTLVFSALLVILAAASA), serve as a signal peptide directing secretion.

The chain is 21 kDa protein from Daucus carota (Wild carrot).